A 332-amino-acid polypeptide reads, in one-letter code: Glycerol-3-phosphate dehydrogenase [NAD(P)+] (332 aa).

The NADPH site is built by Trp-11, Arg-30, and Lys-108. The sn-glycerol 3-phosphate site is built by Lys-108, Gly-137, and Ser-139. Residue Ala-141 participates in NADPH binding. 5 residues coordinate sn-glycerol 3-phosphate: Lys-192, Asp-245, Ser-255, Arg-256, and Asn-257. Lys-192 acts as the Proton acceptor in catalysis. Arg-256 contributes to the NADPH binding site. Residues Val-280 and Glu-282 each contribute to the NADPH site.

The protein belongs to the NAD-dependent glycerol-3-phosphate dehydrogenase family.

It is found in the cytoplasm. The catalysed reaction is sn-glycerol 3-phosphate + NAD(+) = dihydroxyacetone phosphate + NADH + H(+). It catalyses the reaction sn-glycerol 3-phosphate + NADP(+) = dihydroxyacetone phosphate + NADPH + H(+). It participates in membrane lipid metabolism; glycerophospholipid metabolism. Catalyzes the reduction of the glycolytic intermediate dihydroxyacetone phosphate (DHAP) to sn-glycerol 3-phosphate (G3P), the key precursor for phospholipid synthesis. The protein is Glycerol-3-phosphate dehydrogenase [NAD(P)+] of Burkholderia pseudomallei (strain 1710b).